The sequence spans 896 residues: Zinc finger protein 574 (896 aa).

C2H2-type zinc fingers lie at residues 16–38 (YVCS…QNSH) and 76–98 (YQCL…QELH). Phosphoserine is present on serine 113. The C2H2-type 3 zinc-finger motif lies at 126–148 (YECVDCKALFASQELWLNHRQTH). The residue at position 164 (serine 164) is a Phosphoserine. The C2H2-type 4 zinc finger occupies 214 to 236 (YKCSECSQLFQLPADFLEHQATH). The interval 239-301 (APVPESQEPA…RARRNNSGEA (63 aa)) is disordered. Over residues 247-257 (PALQQEVQASS) the composition is skewed to polar residues. Positions 274 to 287 (HSYELRNGEAIGRD) are enriched in basic and acidic residues. Serine 298 is subject to Phosphoserine. C2H2-type zinc fingers lie at residues 309–331 (LFCS…LRSH), 336–358 (FKCP…LGDH), 364–386 (FLCV…RRAH), and 392–413 (HSCP…RRTH). The interval 434-460 (FPEPAPAETGEPEAPEPPVSEETSAGP) is disordered. The segment at 466–489 (YRCLLCSREFGKALQLTRHQRFVH) adopts a C2H2-type 9 zinc-finger fold. The C2H2-type 10; degenerate zinc finger occupies 495–517 (HKCSICGKMFKKKSHVRNHLRTH). C2H2-type zinc fingers lie at residues 523-545 (FPCP…RLTH), 551-573 (YRCG…RLVH), 579-601 (YRCQ…RYHH), and 607-630 (YKCR…LVVH). A C2H2-type 15; degenerate zinc finger spans residues 636–659 (HRCPSCGAAFPSSLRLREHRCAAA). The segment at 667–689 (FECGTCGKKVGSAARLQAHEAAH) adopts a C2H2-type 16 zinc-finger fold. Residues 687-733 (AAHAAAGPGEVLAKEPPAPRAPRATRAPVASPAALGSTATASPAAPA) form a disordered region. The segment covering 707–732 (APRATRAPVASPAALGSTATASPAAP) has biased composition (low complexity). Serine 717 is modified (phosphoserine). The residue at position 724 (threonine 724) is a Phosphothreonine. The residue at position 728 (serine 728) is a Phosphoserine. 4 C2H2-type zinc fingers span residues 738–760 (LECS…RRIH), 766–788 (YPCP…RRLH), 794–816 (FACE…RRIH), and 822–844 (YSCP…RKTH). Arginine 832 is subject to Asymmetric dimethylarginine.

The protein belongs to the krueppel C2H2-type zinc-finger protein family.

It is found in the nucleus. Functionally, may be involved in transcriptional regulation. This is Zinc finger protein 574 (ZNF574) from Homo sapiens (Human).